We begin with the raw amino-acid sequence, 375 residues long: Guanine nucleotide-binding protein subunit beta (375 aa).

WD repeat units follow at residues 63 to 93 (GHTG…IVWN), 105 to 135 (LPCA…SIYN), 154 to 185 (GHKG…VLWD), 202 to 233 (GHTA…RLWD), 246 to 276 (GHEG…RLFD), 293 to 323 (GDIP…YVWD), and 339 to 369 (SHEG…KIWA).

Belongs to the WD repeat G protein beta family. G proteins are composed of 3 units, alpha, beta and gamma.

Its function is as follows. Guanine nucleotide-binding proteins (G proteins) are involved as a modulator or transducer in various transmembrane signaling systems. The beta and gamma chains are required for the GTPase activity, for replacement of GDP by GTP, and for G protein-effector interaction. This Nicotiana tabacum (Common tobacco) protein is Guanine nucleotide-binding protein subunit beta.